The chain runs to 474 residues: Gamma-aminobutyric acid receptor subunit beta-1 (474 aa).

A signal peptide spans 1 to 25 (MWTVQNRESLGLLSFPVMIAMVCCA). Residues 26 to 245 (HSANEPSNMS…SFRLKRNIGY (220 aa)) lie on the Extracellular side of the membrane. N-linked (GlcNAc...) asparagine glycans are attached at residues Asn33 and Asn105. Tyr122 contacts histamine. Cys161 and Cys175 are joined by a disulfide. Asn174 carries an N-linked (GlcNAc...) asparagine glycan. Histamine is bound by residues 181 to 182 (SY) and Thr227. Residues Tyr182 and Thr227 each contribute to the 4-aminobutanoate site. The next 3 helical transmembrane spans lie at 246–267 (FILQTYMPSTLITILSWVSFWI), 271–293 (ASAARVALGITTVLTMTTISTHL), and 305–327 (AIDIYLMGCFVFVFLALLEYAFV). The Cytoplasmic portion of the chain corresponds to 328 to 451 (NYIFFGKGPQ…DLTDVNSIDK (124 aa)). Residues 452–473 (WSRMFFPITFSLFNVVYWLYYV) form a helical membrane-spanning segment.

This sequence belongs to the ligand-gated ion channel (TC 1.A.9) family. Gamma-aminobutyric acid receptor (TC 1.A.9.5) subfamily. GABRB1 sub-subfamily. Heteropentamer, formed by a combination of alpha (GABRA1-6), beta (GABRB1-3), gamma (GABRG1-3), delta (GABRD), epsilon (GABRE), rho (GABRR1-3), pi (GABRP) and theta (GABRQ) chains, each subunit exhibiting distinct physiological and pharmacological properties. Binds UBQLN1.

The protein resides in the postsynaptic cell membrane. The protein localises to the cell membrane. It catalyses the reaction chloride(in) = chloride(out). With respect to regulation, potentiated by histamine. Functionally, beta subunit of the heteropentameric ligand-gated chloride channel gated by gamma-aminobutyric acid (GABA), a major inhibitory neurotransmitter in the brain. GABA-gated chloride channels, also named GABA(A) receptors (GABAAR), consist of five subunits arranged around a central pore and contain GABA active binding site(s) located at the alpha and beta subunit interface(s). When activated by GABA, GABAARs selectively allow the flow of chloride anions across the cell membrane down their electrochemical gradient. Chloride influx into the postsynaptic neuron following GABAAR opening decreases the neuron ability to generate a new action potential, thereby reducing nerve transmission. Beta-containing GABAARs can simultaneously bind GABA and histamine where histamine binds at the interface of two neighboring beta subunits, which may be involved in the regulation of sleep and wakefulness. The protein is Gamma-aminobutyric acid receptor subunit beta-1 (GABRB1) of Bos taurus (Bovine).